The sequence spans 601 residues: Glutathione-regulated potassium-efflux system protein KefB (601 aa).

The next 13 helical transmembrane spans lie at 4-24, 29-49, 55-75, 87-107, 111-131, 152-172, 177-197, 207-227, 230-250, 262-282, 284-304, 324-344, and 356-376; these read ADLL…VPLA, IGAV…GLGF, EILH…GLEL, IFGV…GLLM, FLWQ…TAMA, VLLF…LLAG, HFDW…LIGG, FIAA…LVLS, LFMD…GVLL, AIDP…GMSL, LGVL…LVVI, MQFA…FSTA, and ALLL…MKGI. The 120-residue stretch at 400-519 folds into the RCK N-terminal domain; sequence KPQVIVVGFG…AGVTQFSRET (120 aa).

It belongs to the monovalent cation:proton antiporter 2 (CPA2) transporter (TC 2.A.37) family. KefB subfamily. As to quaternary structure, interacts with the regulatory subunit KefG.

It is found in the cell inner membrane. Its function is as follows. Pore-forming subunit of a potassium efflux system that confers protection against electrophiles. Catalyzes K(+)/H(+) antiport. The protein is Glutathione-regulated potassium-efflux system protein KefB of Salmonella paratyphi B (strain ATCC BAA-1250 / SPB7).